The sequence spans 401 residues: E3 ubiquitin-protein ligase RGLG4 (401 aa).

The segment at 1–43 is disordered; that stretch reads MTMGNFLKRFGSGKSRSSRNMTLGTTSSQSHEPSPSDPSLSLA. Positions 8 to 19 are enriched in low complexity; the sequence is KRFGSGKSRSSR. Over residues 20-32 the composition is skewed to polar residues; the sequence is NMTLGTTSSQSHE. In terms of domain architecture, VWFA spans 79 to 299; it reads NLILGVDFTK…KETAFALAAL (221 aa). Positions 326–350 are disordered; the sequence is VPRPPPIPYTPPTNAELPSTASPAS. Pro residues predominate over residues 327-336; the sequence is PRPPPIPYTP. Polar residues predominate over residues 341-350; that stretch reads ELPSTASPAS. Residues 357-390 form an RING-type zinc finger; that stretch reads CPICLTNRKDVAFSCGHMTCGDCGSKISNCPICR.

As to quaternary structure, interacts with UBC30, GRXS17 and GLB3. As to expression, widely expressed.

The protein resides in the cytoplasm. It is found in the nucleus. It catalyses the reaction S-ubiquitinyl-[E2 ubiquitin-conjugating enzyme]-L-cysteine + [acceptor protein]-L-lysine = [E2 ubiquitin-conjugating enzyme]-L-cysteine + N(6)-ubiquitinyl-[acceptor protein]-L-lysine.. In terms of biological role, possesses E3 ubiquitin-protein ligase in vitro. Acts as upstream modulator of jasmonate (JA) signaling in response to various stimuli, such as JA-inhibited root growth, JA-inductive gene expression, coronatine-mediated pathogen susceptibility, wound-stimulated expression of JA-responsive genes and wound-induced JA biosynthesis. Controls fumonisin B1 (FB1)-triggered programmed cell death (PCD) by modulating the JA signaling pathway. May mediate salicylic acid (SA) suppression of JA signaling in FB1-induced responses. May mediate the formation of 'Lys-48'-linked multiubiquitin chains. Mediates the polyubiquitination and subsequent proteasomal degradation of the target protein GRXS17. The chain is E3 ubiquitin-protein ligase RGLG4 from Arabidopsis thaliana (Mouse-ear cress).